A 560-amino-acid chain; its full sequence is Kinesin light chain 1 (560 aa).

Residues 27–156 (KTKQVIQGLE…HLEFMNQLKK (130 aa)) adopt a coiled-coil conformation. Basic and acidic residues predominate over residues 156–176 (KYDDDISPSEDKDSDSSKEPL). A disordered region spans residues 156–203 (KYDDDISPSEDKDSDSSKEPLDDLFPNDEDDPGQGIQQQHSSAAAAAQ). The residue at position 162 (Ser162) is a Phosphoserine. Residues 188–203 (GQGIQQQHSSAAAAAQ) are compositionally biased toward low complexity. TPR repeat units follow at residues 213–246 (LRTLHNLVIQYASQGRYEVAVPLCKQALEDLEKT), 255–288 (ATMLNILALVYRDQNKYKDAANLLNDALAIREKT), 297–330 (AATLNNLAVLYGKRGKYKEAEPLCKRALEIREKV), 339–372 (AKQLNNLALLCQNQGKYEEVEYYYQRALEIYQTK), and 381–414 (AKTKNNLASCYLKQGKFKQAETLYKEILTRAHER). The residue at position 449 (Tyr449) is a Phosphotyrosine. At Ser460 the chain carries Phosphoserine. A TPR 6 repeat occupies 464 to 497 (TTTLKNLGALYRRQGKFEAAETLEEAALRSRKQG). A phosphoserine mark is found at Ser521 and Ser524.

This sequence belongs to the kinesin light chain family. As to quaternary structure, oligomeric complex composed of two heavy chains and two light chains. Interacts with SPAG9. Interacts with ATCAY; may link mitochondria to KLC1 and regulate mitochondria localization into neuron projections. Interacts (via TPR repeats) with TOR1A; the interaction associates TOR1A with the kinesin oligomeric complex. Interacts with BORCS5. Interacts with MAPK8IP3/JIP3 and NTRK2/TRKB; interaction with NTRK2/TRKB is mediated by MAPK8IP3/JIP3. Interacts with CLSTN1; phosphorylation at Ser-460 inhibits interaction with CLSTN1. Phosphorylation at Ser-460 by ERK inhibits interaction with CLSTN1 and localization to cytoplasmic vesicles. In terms of tissue distribution, expressed in brain (at protein level).

Its subcellular location is the cell projection. It localises to the growth cone. It is found in the cytoplasmic vesicle. The protein localises to the cytoplasm. The protein resides in the cytoskeleton. Its function is as follows. Kinesin is a microtubule-associated force-producing protein that may play a role in organelle transport. The light chain may function in coupling of cargo to the heavy chain or in the modulation of its ATPase activity. In Rattus norvegicus (Rat), this protein is Kinesin light chain 1 (Klc1).